A 461-amino-acid chain; its full sequence is Integrator complex subunit 12 (461 aa).

The segment at G42 to V131 is disordered. A Glycyl lysine isopeptide (Lys-Gly) (interchain with G-Cter in SUMO2) cross-link involves residue K68. Residues T88 to T124 show a composition bias toward basic and acidic residues. S127 carries the post-translational modification Phosphoserine. The PHD-type zinc-finger motif lies at G158 to Q214. K253 participates in a covalent cross-link: Glycyl lysine isopeptide (Lys-Gly) (interchain with G-Cter in SUMO2). Over residues A302 to K328 the composition is skewed to polar residues. The disordered stretch occupies residues A302 to A443. Low complexity-rich tracts occupy residues G348–V357 and V381–S436.

The protein belongs to the Integrator subunit 12 family. As to quaternary structure, component of the Integrator complex, composed of core subunits INTS1, INTS2, INTS3, INTS4, INTS5, INTS6, INTS7, INTS8, INTS9/RC74, INTS10, INTS11/CPSF3L, INTS12, INTS13, INTS14 and INTS15. The core complex associates with protein phosphatase 2A subunits PPP2CA and PPP2R1A, to form the Integrator-PP2A (INTAC) complex. Dephosphorylated at Ser-127 by the PNUTS-PP1 complex, promoting RNA polymerase II transcription pause-release.

The protein resides in the nucleus. Functionally, component of the integrator complex, a multiprotein complex that terminates RNA polymerase II (Pol II) transcription in the promoter-proximal region of genes. The integrator complex provides a quality checkpoint during transcription elongation by driving premature transcription termination of transcripts that are unfavorably configured for transcriptional elongation: the complex terminates transcription by (1) catalyzing dephosphorylation of the C-terminal domain (CTD) of Pol II subunit POLR2A/RPB1 and SUPT5H/SPT5, (2) degrading the exiting nascent RNA transcript via endonuclease activity and (3) promoting the release of Pol II from bound DNA. The integrator complex is also involved in terminating the synthesis of non-coding Pol II transcripts, such as enhancer RNAs (eRNAs), small nuclear RNAs (snRNAs), telomerase RNAs and long non-coding RNAs (lncRNAs). Mediates recruitment of cytoplasmic dynein to the nuclear envelope, probably as component of the integrator complex. This chain is Integrator complex subunit 12 (Ints12), found in Mus musculus (Mouse).